The primary structure comprises 103 residues: Large ribosomal subunit protein bL21 (103 aa).

Belongs to the bacterial ribosomal protein bL21 family. Part of the 50S ribosomal subunit. Contacts protein L20.

This protein binds to 23S rRNA in the presence of protein L20. The protein is Large ribosomal subunit protein bL21 of Pseudomonas syringae pv. syringae (strain B728a).